The sequence spans 126 residues: MARLVGVDLPREKRLEIALTYIFGVGRTRAKETLAATGVSPDLRVRDLSDDDLVALRDHIEGNYRVEGDLRREVAADIRRKVEIGTYQGLRHRRGLPVRGQRTKTNARTRKGPKRTVAGKKKAGRK.

Positions His-92–Lys-126 are disordered.

Belongs to the universal ribosomal protein uS13 family. Part of the 30S ribosomal subunit. Forms a loose heterodimer with protein S19. Forms two bridges to the 50S subunit in the 70S ribosome.

Functionally, located at the top of the head of the 30S subunit, it contacts several helices of the 16S rRNA. In the 70S ribosome it contacts the 23S rRNA (bridge B1a) and protein L5 of the 50S subunit (bridge B1b), connecting the 2 subunits; these bridges are implicated in subunit movement. Contacts the tRNAs in the A and P-sites. The chain is Small ribosomal subunit protein uS13 from Kineococcus radiotolerans (strain ATCC BAA-149 / DSM 14245 / SRS30216).